The chain runs to 467 residues: Asparagine--tRNA ligase (467 aa).

The protein belongs to the class-II aminoacyl-tRNA synthetase family. As to quaternary structure, homodimer.

The protein resides in the cytoplasm. It carries out the reaction tRNA(Asn) + L-asparagine + ATP = L-asparaginyl-tRNA(Asn) + AMP + diphosphate + H(+). This is Asparagine--tRNA ligase from Actinobacillus pleuropneumoniae serotype 3 (strain JL03).